A 643-amino-acid polypeptide reads, in one-letter code: Replication protein E1 (643 aa).

Residues 86–88 carry the Nuclear localization signal motif; that stretch reads KRK. The short motif at 109 to 118 is the Nuclear export signal element; that stretch reads LSPRLQEISL. At Ser110 the chain carries Phosphoserine; by host. Residues 152–175 are compositionally biased toward polar residues; that stretch reads NTNAENGGSVHSTQSSGGDSSDNA. A disordered region spans residues 152 to 178; the sequence is NTNAENGGSVHSTQSSGGDSSDNAENV. Residues 179 to 345 form a DNA-binding region region; that stretch reads DPHCSITELK…LTIIQHGIDD (167 aa). Residues 444-594 enclose the SF3 helicase domain; it reads VEFISFLRAL…FPFDKNGNPV (151 aa). ATP is bound at residue 470–477; that stretch reads GPANTGKS. Lys551 participates in a covalent cross-link: Glycyl lysine isopeptide (Lys-Gly) (interchain with G-Cter in SUMO).

It belongs to the papillomaviridae E1 protein family. Can form hexamers. Interacts with E2 protein; this interaction increases E1 DNA binding specificity. Interacts with host DNA polymerase subunit POLA2. Interacts with host single stranded DNA-binding protein RPA1. Interacts with host TOP1; this interaction stimulates the enzymatic activity of TOP1. Phosphorylated. In terms of processing, sumoylated.

It is found in the host nucleus. It carries out the reaction Couples ATP hydrolysis with the unwinding of duplex DNA by translocating in the 3'-5' direction.. It catalyses the reaction ATP + H2O = ADP + phosphate + H(+). Its function is as follows. ATP-dependent DNA 3'-5' helicase required for initiation of viral DNA replication. It forms a complex with the viral E2 protein. The E1-E2 complex binds to the replication origin which contains binding sites for both proteins. During the initial step, a dimer of E1 interacts with a dimer of protein E2 leading to a complex that binds the viral origin of replication with high specificity. Then, a second dimer of E1 displaces the E2 dimer in an ATP-dependent manner to form the E1 tetramer. Following this, two E1 monomers are added to each half of the site, which results in the formation of two E1 trimers on the viral ori. Subsequently, two hexamers will be created. The double hexamer acts as a bi-directional helicase machinery and unwinds the viral DNA and then recruits the host DNA polymerase to start replication. In Human papillomavirus 45, this protein is Replication protein E1.